The chain runs to 353 residues: Fasciculation and elongation protein zeta-2 (353 aa).

Residues 19-49 form a disordered region; the sequence is SLLDQENCNASPEPGAEAGAEAGGGADGFPA. Low complexity predominate over residues 28–38; the sequence is ASPEPGAEAGA. Phosphoserine is present on residues S135, S176, and S195. The stretch at 214-286 forms a coiled coil; that stretch reads KRLSVSELNE…AKKKKKLKNG (73 aa). The disordered stretch occupies residues 271 to 300; the sequence is KEHKETAKKKKKLKNGSSQNGKNERSHMPG.

It belongs to the zygin family. In terms of assembly, homodimer; disulfide-linked. May form heterodimers with FEZ1. Interacts with synaptotagmin. As to expression, expressed in nonneural tissues, such as heart, lung, spleen, muscle, testis, placenta and melanocytes.

In terms of biological role, involved in axonal outgrowth and fasciculation. The protein is Fasciculation and elongation protein zeta-2 (FEZ2) of Homo sapiens (Human).